The sequence spans 65 residues: Conotoxin mr5.1b (65 aa).

An N-terminal signal peptide occupies residues 1-19 (MRCVPVFVILLLLIASAPS). A propeptide spanning residues 20-48 (VDARLKTKDDMPLPSSHANIKRTLQMLRN) is cleaved from the precursor. 4-carboxyglutamate is present on glutamate 60.

This sequence belongs to the conotoxin T superfamily. Contains 2 disulfide bonds that can be either 'C1-C3, C2-C4' or 'C1-C4, C2-C3', since these disulfide connectivities have been observed for conotoxins with cysteine framework V (for examples, see AC P0DQQ7 and AC P81755). As to expression, expressed by the venom duct.

It is found in the secreted. This Conus marmoreus (Marble cone) protein is Conotoxin mr5.1b.